The chain runs to 151 residues: Small ribosomal subunit protein uS15 (151 aa).

The segment at 1 to 20 (MARLHSGKRGSSGSTRPLRT) is disordered.

The protein belongs to the universal ribosomal protein uS15 family. Part of the 30S ribosomal subunit.

This is Small ribosomal subunit protein uS15 from Methanococcus maripaludis (strain DSM 14266 / JCM 13030 / NBRC 101832 / S2 / LL).